Consider the following 251-residue polypeptide: Probable inactive cytidine deaminase 4 (251 aa).

61–63 is a substrate binding site; it reads NVE. Glu-76 functions as the Proton donor in the catalytic mechanism. The region spanning 136–251 is the CMP/dCMP-type deaminase domain; that stretch reads EHCSHLKCRA…VFRCHKTAEN (116 aa).

The protein belongs to the cytidine and deoxycytidylate deaminase family. As to quaternary structure, homodimer.

The protein is Probable inactive cytidine deaminase 4 (CDA4) of Arabidopsis thaliana (Mouse-ear cress).